The primary structure comprises 132 residues: Large ribosomal subunit protein uL14 (132 aa).

The protein belongs to the universal ribosomal protein uL14 family. As to quaternary structure, part of the 50S ribosomal subunit. Forms a cluster with proteins L3 and L24e, part of which may contact the 16S rRNA in 2 intersubunit bridges.

Its function is as follows. Binds to 23S rRNA. Forms part of two intersubunit bridges in the 70S ribosome. The protein is Large ribosomal subunit protein uL14 of Methanococcus maripaludis (strain DSM 14266 / JCM 13030 / NBRC 101832 / S2 / LL).